Here is a 1450-residue protein sequence, read N- to C-terminus: DNA-directed RNA polymerase RPB1 homolog (1450 aa).

The protein belongs to the RNA polymerase beta' chain family. In terms of assembly, part of the viral DNA-directed RNA polymerase that consists of 8 polII-like subunits (RPB1, RPB2, RPB3, RPB5, RPB6, RPB7, RPB9, RPB10), a capping enzyme and a termination factor.

The protein resides in the virion. It carries out the reaction RNA(n) + a ribonucleoside 5'-triphosphate = RNA(n+1) + diphosphate. Catalytic component of the DNA-directed RNA polymerase (RNAP) that catalyzes the transcription in the cytoplasm of viral DNA into RNA using the four ribonucleoside triphosphates as substrates. Forms the polymerase active center together with RPB2. Part of the core element with the central large cleft, the clamp element that moves to open and close the cleft and the jaws that are thought to grab the incoming DNA template. This is DNA-directed RNA polymerase RPB1 homolog from African swine fever virus (isolate Pig/Kenya/KEN-50/1950) (ASFV).